The sequence spans 484 residues: Dual specificity protein kinase CLK1 (484 aa).

Residues 1-42 (MRHSKRTYCPDWDDKDWDYGKWRSSSSHKRRKRSHSSAQENK) are disordered. Residues 26 to 35 (SSHKRRKRSH) are compositionally biased toward basic residues. S61 carries the post-translational modification Phosphoserine. Positions 79–146 (DYTQGCEPGH…RTRSVEDDEE (68 aa)) are disordered. A compositionally biased stretch (basic and acidic residues) spans 86–97 (PGHRQRDHESRY). Residues 100–112 (HSSKSSGRSGRSS) are compositionally biased toward low complexity. A compositionally biased stretch (basic residues) spans 113–138 (YKSKHRIHHSTSHRRSHGKSHRRKRT). T138 carries the phosphothreonine modification. The residue at position 140 (S140) is a Phosphoserine. The Protein kinase domain occupies 161 to 477 (YEIVDTLGEG…LREALKHPFF (317 aa)). ATP-binding positions include 167–175 (LGEGAFGKV) and K191. D288 acts as the Proton acceptor in catalysis.

This sequence belongs to the protein kinase superfamily. CMGC Ser/Thr protein kinase family. Lammer subfamily. In terms of assembly, interacts with PPIG and UBL5. Post-translationally, autophosphorylates on all three types of residues. In terms of tissue distribution, endothelial cells.

The protein resides in the nucleus. The enzyme catalyses L-seryl-[protein] + ATP = O-phospho-L-seryl-[protein] + ADP + H(+). The catalysed reaction is L-threonyl-[protein] + ATP = O-phospho-L-threonyl-[protein] + ADP + H(+). It carries out the reaction L-tyrosyl-[protein] + ATP = O-phospho-L-tyrosyl-[protein] + ADP + H(+). Regulates splicing of its own pre-mRNA according to its kinase activity; increased expression of the catalytically active form influences splicing to generate the catalytically inactive splicing variant lacking the kinase domain. Leucettine L41 inhibits its kinase activity and affects the regulation of alternative splicing mediated by phosphorylation of SR proteins. In terms of biological role, dual specificity kinase acting on both serine/threonine and tyrosine-containing substrates. Phosphorylates serine- and arginine-rich (SR) proteins of the spliceosomal complex and may be a constituent of a network of regulatory mechanisms that enable SR proteins to control RNA splicing. Phosphorylates: SRSF1, SRSF3 and PTPN1. Regulates the alternative splicing of tissue factor (F3) pre-mRNA in endothelial cells. This Homo sapiens (Human) protein is Dual specificity protein kinase CLK1.